The sequence spans 132 residues: Small ribosomal subunit protein uS11 (132 aa).

Belongs to the universal ribosomal protein uS11 family. In terms of assembly, part of the 30S ribosomal subunit. Interacts with proteins S7 and S18. Binds to IF-3.

Its function is as follows. Located on the platform of the 30S subunit, it bridges several disparate RNA helices of the 16S rRNA. Forms part of the Shine-Dalgarno cleft in the 70S ribosome. This chain is Small ribosomal subunit protein uS11, found in Chlamydia trachomatis serovar A (strain ATCC VR-571B / DSM 19440 / HAR-13).